Consider the following 591-residue polypeptide: L-fucose isomerase (591 aa).

Active-site proton acceptor residues include E338 and D362. E338, D362, and H529 together coordinate Mn(2+).

Belongs to the L-fucose isomerase family. It depends on Mn(2+) as a cofactor.

The protein localises to the cytoplasm. It catalyses the reaction L-fucose = L-fuculose. It functions in the pathway carbohydrate degradation; L-fucose degradation; L-lactaldehyde and glycerone phosphate from L-fucose: step 1/3. Functionally, converts the aldose L-fucose into the corresponding ketose L-fuculose. The chain is L-fucose isomerase from Bacteroides thetaiotaomicron (strain ATCC 29148 / DSM 2079 / JCM 5827 / CCUG 10774 / NCTC 10582 / VPI-5482 / E50).